The primary structure comprises 101 residues: Protein Tat (101 aa).

Residues M1–N24 are interaction with human CREBBP. A transactivation region spans residues M1 to G48. Zn(2+)-binding residues include C22, C25, and C27. The segment at C22 to C37 is cysteine-rich. Position 28 is an N6-acetyllysine; by host PCAF (K28). Zn(2+) contacts are provided by C30, H33, C34, and C37. The core stretch occupies residues F38 to G48. Residues Y47 to D101 form a disordered region. Residues G48–A58 are compositionally biased toward basic residues. A Nuclear localization signal, RNA-binding (TAR), and protein transduction motif is present at residues R49 to R57. The segment at R49–E86 is interaction with the host capping enzyme RNGTT. 2 positions are modified to N6-acetyllysine; by host EP300 and GCN5L2: K50 and K51. 2 positions are modified to asymmetric dimethylarginine; by host PRMT6: R52 and R53. The span at D61–G79 shows a compositional bias: polar residues. K71 is covalently cross-linked (Glycyl lysine isopeptide (Lys-Gly) (interchain with G-Cter in ubiquitin)). The Cell attachment site motif lies at R78 to D80. Positions G83 to D101 are enriched in basic and acidic residues.

It belongs to the lentiviruses Tat family. In terms of assembly, interacts with host CCNT1. Associates with the P-TEFb complex composed at least of Tat, P-TEFb (CDK9 and CCNT1), TAR RNA, RNA Pol II. Recruits the HATs CREBBP, TAF1/TFIID, EP300, PCAF and GCN5L2. Interacts with host KAT5/Tip60; this interaction targets the latter to degradation. Interacts with the host deacetylase SIRT1. Interacts with host capping enzyme RNGTT; this interaction stimulates RNGTT. Binds to host KDR, and to the host integrins ITGAV/ITGB3 and ITGA5/ITGB1. Interacts with host KPNB1/importin beta-1 without previous binding to KPNA1/importin alpha-1. Interacts with EIF2AK2. Interacts with host nucleosome assembly protein NAP1L1; this interaction may be required for the transport of Tat within the nucleus, since the two proteins interact at the nuclear rim. Interacts with host C1QBP/SF2P32; this interaction involves lysine-acetylated Tat. Interacts with the host chemokine receptors CCR2, CCR3 and CXCR4. Interacts with host DPP4/CD26; this interaction may trigger an anti-proliferative effect. Interacts with host LDLR. Interacts with the host extracellular matrix metalloproteinase MMP1. Interacts with host PRMT6; this interaction mediates Tat's methylation. Interacts with, and is ubiquitinated by MDM2/Hdm2. Interacts with host PSMC3 and HTATIP2. Interacts with STAB1; this interaction may overcome SATB1-mediated repression of IL2 and IL2RA (interleukin) in T cells by binding to the same domain than HDAC1. Interacts (when acetylated) with human CDK13, thereby increasing HIV-1 mRNA splicing and promoting the production of the doubly spliced HIV-1 protein Nef. Interacts with host TBP; this interaction modulates the activity of transcriptional pre-initiation complex. Interacts with host RELA. Interacts with host PLSCR1; this interaction negatively regulates Tat transactivation activity by altering its subcellular distribution. Post-translationally, asymmetrical arginine methylation by host PRMT6 seems to diminish the transactivation capacity of Tat and affects the interaction with host CCNT1. Acetylation by EP300, CREBBP, GCN5L2/GCN5 and PCAF regulates the transactivation activity of Tat. EP300-mediated acetylation of Lys-50 promotes dissociation of Tat from the TAR RNA through the competitive binding to PCAF's bromodomain. In addition, the non-acetylated Tat's N-terminus can also interact with PCAF. PCAF-mediated acetylation of Lys-28 enhances Tat's binding to CCNT1. Lys-50 is deacetylated by SIRT1. In terms of processing, polyubiquitination by host MDM2 does not target Tat to degradation, but activates its transactivation function and fosters interaction with CCNT1 and TAR RNA. Post-translationally, phosphorylated by EIF2AK2 on serine and threonine residues adjacent to the basic region important for TAR RNA binding and function. Phosphorylation of Tat by EIF2AK2 is dependent on the prior activation of EIF2AK2 by dsRNA.

Its subcellular location is the host nucleus. The protein localises to the host nucleolus. It is found in the host cytoplasm. The protein resides in the secreted. In terms of biological role, transcriptional activator that increases RNA Pol II processivity, thereby increasing the level of full-length viral transcripts. Recognizes a hairpin structure at the 5'-LTR of the nascent viral mRNAs referred to as the transactivation responsive RNA element (TAR) and recruits the cyclin T1-CDK9 complex (P-TEFb complex) that will in turn hyperphosphorylate the RNA polymerase II to allow efficient elongation. The CDK9 component of P-TEFb and other Tat-activated kinases hyperphosphorylate the C-terminus of RNA Pol II that becomes stabilized and much more processive. Other factors such as HTATSF1/Tat-SF1, SUPT5H/SPT5, and HTATIP2 are also important for Tat's function. Besides its effect on RNA Pol II processivity, Tat induces chromatin remodeling of proviral genes by recruiting the histone acetyltransferases (HATs) CREBBP, EP300 and PCAF to the chromatin. This also contributes to the increase in proviral transcription rate, especially when the provirus integrates in transcriptionally silent region of the host genome. To ensure maximal activation of the LTR, Tat mediates nuclear translocation of NF-kappa-B by interacting with host RELA. Through its interaction with host TBP, Tat may also modulate transcription initiation. Tat can reactivate a latently infected cell by penetrating in it and transactivating its LTR promoter. In the cytoplasm, Tat is thought to act as a translational activator of HIV-1 mRNAs. Functionally, extracellular circulating Tat can be endocytosed by surrounding uninfected cells via the binding to several surface receptors such as CD26, CXCR4, heparan sulfate proteoglycans (HSPG) or LDLR. Neurons are rarely infected, but they internalize Tat via their LDLR. Through its interaction with nuclear HATs, Tat is potentially able to control the acetylation-dependent cellular gene expression. Modulates the expression of many cellular genes involved in cell survival, proliferation or in coding for cytokines or cytokine receptors. Tat plays a role in T-cell and neurons apoptosis. Tat induced neurotoxicity and apoptosis probably contribute to neuroAIDS. Circulating Tat also acts as a chemokine-like and/or growth factor-like molecule that binds to specific receptors on the surface of the cells, affecting many cellular pathways. In the vascular system, Tat binds to ITGAV/ITGB3 and ITGA5/ITGB1 integrins dimers at the surface of endothelial cells and competes with bFGF for heparin-binding sites, leading to an excess of soluble bFGF. The chain is Protein Tat from Homo sapiens (Human).